The chain runs to 75 residues: Small integral membrane protein 7-A (75 aa).

The N-terminal stretch at 1–17 (MIGDLLLFGTLLVNAGA) is a signal peptide. At 18–53 (VLNFKLKKKESQGFGDDLTEATTGDNIREFLLSLRY) the chain is on the extracellular side. A helical transmembrane segment spans residues 54–74 (FRIFIALWNIFMMFCMIVLFG). Residue Ser-75 is a topological domain, cytoplasmic.

This sequence belongs to the SMIM7 family.

It localises to the membrane. This Xenopus laevis (African clawed frog) protein is Small integral membrane protein 7-A (smim7-a).